A 356-amino-acid polypeptide reads, in one-letter code: Probable farnesyl diphosphate synthase DDB_G0278823 (356 aa).

Residues Lys55, Arg58, and Gln94 each coordinate isopentenyl diphosphate. Positions 101 and 105 each coordinate Mg(2+). Arg110 is a binding site for dimethylallyl diphosphate. Arg111 is an isopentenyl diphosphate binding site. Dimethylallyl diphosphate contacts are provided by Lys203, Thr204, Gln243, Lys260, and Lys269.

Belongs to the FPP/GGPP synthase family. Mg(2+) serves as cofactor.

The protein resides in the cytoplasm. The catalysed reaction is isopentenyl diphosphate + dimethylallyl diphosphate = (2E)-geranyl diphosphate + diphosphate. The enzyme catalyses isopentenyl diphosphate + (2E)-geranyl diphosphate = (2E,6E)-farnesyl diphosphate + diphosphate. Its pathway is isoprenoid biosynthesis; farnesyl diphosphate biosynthesis; farnesyl diphosphate from geranyl diphosphate and isopentenyl diphosphate: step 1/1. It functions in the pathway isoprenoid biosynthesis; geranyl diphosphate biosynthesis; geranyl diphosphate from dimethylallyl diphosphate and isopentenyl diphosphate: step 1/1. Its activity is regulated as follows. Inhibited by aminobisphosphonate drugs (aBP), such as risedronate and alendronate. Functionally, key enzyme in isoprenoid biosynthesis which catalyzes the formation of farnesyl diphosphate (FPP), a sterol precursor. In Dictyostelium discoideum (Social amoeba), this protein is Probable farnesyl diphosphate synthase DDB_G0278823.